Here is a 354-residue protein sequence, read N- to C-terminus: UPF0283 membrane protein plu2581 (354 aa).

The next 3 membrane-spanning stretches (helical) occupy residues 71-91 (MVYG…VQWI), 101-121 (SALG…GSLV), and 214-234 (ESAL…FIAW).

This sequence belongs to the UPF0283 family.

It is found in the cell inner membrane. The protein is UPF0283 membrane protein plu2581 of Photorhabdus laumondii subsp. laumondii (strain DSM 15139 / CIP 105565 / TT01) (Photorhabdus luminescens subsp. laumondii).